Consider the following 250-residue polypeptide: Thioesterase FPSE_09186 (250 aa).

The protein belongs to the AMT4 thioesterase family.

It functions in the pathway secondary metabolite biosynthesis. Thioesterase; part of the gene cluster that mediates the biosynthesis of the lipopeptides W493 A and B. W493 A and B consist of six amino acid residues D-allo-thr, L-Ala, D-Ala, L-Gln, D-Tyr, and L-Val/L-Ile linked to a 3-hydroxy-4-methyltetradecanoic acid polyketide chain. The biosynthesis starts with formation of the linear polyketide chain by the highly reducing polyketide synthase PKS40. The gene cluster contains a putative acyl-CoA ligase (FPSE_09184) for formation of a CoA thioester polyketide. The thiol bond could be hydrolyzed by the putative thioesterase (FPSE_09186) and then accepted by the first T domain in module 1 of NRPS32. The second T domain is responsible for accepting a threonine, which is adenylated by the A domain and epimerized to the D-allo-threonine formed by the E domain. The five successive modules incorporate Ala, Ala, Gln, Tyr, and Val/Ile into the final product, which is released by cyclization. This chain is Thioesterase FPSE_09186, found in Fusarium pseudograminearum (strain CS3096) (Wheat and barley crown-rot fungus).